The sequence spans 680 residues: Probable oxidoreductase YoaE (680 aa).

In terms of domain architecture, 4Fe-4S Mo/W bis-MGD-type spans 9 to 66 (NGIFKSVCSLDCPDQCGLLIHKKDGKIVKVQGDPDHPVTAGNICNKVRNMTERIYDEK). [4Fe-4S] cluster contacts are provided by C16, C20, C24, and C52.

The protein belongs to the prokaryotic molybdopterin-containing oxidoreductase family. Mo-bis(molybdopterin guanine dinucleotide) serves as cofactor.

The chain is Probable oxidoreductase YoaE (yoaE) from Bacillus subtilis (strain 168).